A 435-amino-acid chain; its full sequence is Serine hydroxymethyltransferase (435 aa).

(6S)-5,6,7,8-tetrahydrofolate-binding positions include Leu131 and 135-137 (GHL). Position 240 is an N6-(pyridoxal phosphate)lysine (Lys240).

Belongs to the SHMT family. In terms of assembly, homodimer. It depends on pyridoxal 5'-phosphate as a cofactor.

The protein localises to the cytoplasm. The catalysed reaction is (6R)-5,10-methylene-5,6,7,8-tetrahydrofolate + glycine + H2O = (6S)-5,6,7,8-tetrahydrofolate + L-serine. It functions in the pathway one-carbon metabolism; tetrahydrofolate interconversion. The protein operates within amino-acid biosynthesis; glycine biosynthesis; glycine from L-serine: step 1/1. Its function is as follows. Catalyzes the reversible interconversion of serine and glycine with tetrahydrofolate (THF) serving as the one-carbon carrier. This reaction serves as the major source of one-carbon groups required for the biosynthesis of purines, thymidylate, methionine, and other important biomolecules. Also exhibits THF-independent aldolase activity toward beta-hydroxyamino acids, producing glycine and aldehydes, via a retro-aldol mechanism. The protein is Serine hydroxymethyltransferase of Bifidobacterium longum subsp. infantis (strain ATCC 15697 / DSM 20088 / JCM 1222 / NCTC 11817 / S12).